A 358-amino-acid polypeptide reads, in one-letter code: NADH-quinone oxidoreductase subunit H (358 aa).

8 helical membrane passes run 20–40, 95–115, 128–148, 168–188, 206–226, 253–273, 290–310, and 334–354; these read ITVGLVVSVIVKIVIILIPLI, ALFYIGPIMSLAPSFAAWAVI, IGLLYILMITSLSVYGVIIAG, ISYEIAMSAALVCVVMVSGSM, VFSWNWLPLFPIFIVYLISAV, GFAFALFFLAEYIFMILISAL, WGFIGTPSAFWMFVKMAAVLY, and VLIPIGFAYIVVLGVWMISPL.

Belongs to the complex I subunit 1 family. NDH-1 is composed of 14 different subunits. Subunits NuoA, H, J, K, L, M, N constitute the membrane sector of the complex.

It is found in the cell inner membrane. The catalysed reaction is a quinone + NADH + 5 H(+)(in) = a quinol + NAD(+) + 4 H(+)(out). Its function is as follows. NDH-1 shuttles electrons from NADH, via FMN and iron-sulfur (Fe-S) centers, to quinones in the respiratory chain. The immediate electron acceptor for the enzyme in this species is believed to be ubiquinone. Couples the redox reaction to proton translocation (for every two electrons transferred, four hydrogen ions are translocated across the cytoplasmic membrane), and thus conserves the redox energy in a proton gradient. This subunit may bind ubiquinone. This Neisseria meningitidis serogroup C (strain 053442) protein is NADH-quinone oxidoreductase subunit H.